Reading from the N-terminus, the 111-residue chain is Large ribosomal subunit protein P2 (111 aa).

The interval 81 to 111 (AAGGAAAPAAEEKKEEEKEESDEDMGFGLFD) is disordered. At Ser-101 the chain carries Phosphoserine.

This sequence belongs to the eukaryotic ribosomal protein P1/P2 family. As to quaternary structure, P1 and P2 exist as dimers at the large ribosomal subunit.

Functionally, plays an important role in the elongation step of protein synthesis. This is Large ribosomal subunit protein P2 from Aspergillus fumigatus (strain ATCC MYA-4609 / CBS 101355 / FGSC A1100 / Af293) (Neosartorya fumigata).